We begin with the raw amino-acid sequence, 351 residues long: Sulfate/thiosulfate import ATP-binding protein CysA (351 aa).

In terms of domain architecture, ABC transporter spans 3-237 (ITVRNLHKRF…PRSAFVYEFL (235 aa)). 35 to 42 (GPSGCGKT) is a binding site for ATP.

The protein belongs to the ABC transporter superfamily. Sulfate/tungstate importer (TC 3.A.1.6) family. As to quaternary structure, the complex is composed of two ATP-binding proteins (CysA), two transmembrane proteins (CysT and CysW) and a solute-binding protein (CysP).

It localises to the cell inner membrane. It carries out the reaction sulfate(out) + ATP + H2O = sulfate(in) + ADP + phosphate + H(+). It catalyses the reaction thiosulfate(out) + ATP + H2O = thiosulfate(in) + ADP + phosphate + H(+). Part of the ABC transporter complex CysAWTP involved in sulfate/thiosulfate import. Responsible for energy coupling to the transport system. The protein is Sulfate/thiosulfate import ATP-binding protein CysA of Burkholderia pseudomallei (strain K96243).